Reading from the N-terminus, the 119-residue chain is Protein RALF-like 22 (119 aa).

Residues 1–23 (MTNTRAIYAVIAILAIVISAVES) form the signal peptide. Residues 24-70 (TGDFGDSLDFVRAGSSSLFSGCTGSIAECIAEEEEMEFDSDISRRIL) constitute a propeptide, removed in mature form. Intrachain disulfides connect cysteine 88/cysteine 98 and cysteine 111/cysteine 117.

The protein belongs to the plant rapid alkalinization factor (RALF) family. Proteolytically cleaved, probably by S1P, a subtilisin-like serine protease (subtilase).

Its subcellular location is the secreted. Its function is as follows. Cell signaling peptide that may regulate plant stress, growth, and development. Mediates a rapid alkalinization of extracellular space by mediating a transient increase in the cytoplasmic Ca(2+) concentration leading to a calcium-dependent signaling events through a cell surface receptor and a concomitant activation of some intracellular mitogen-activated protein kinases. The polypeptide is Protein RALF-like 22 (RALFL22) (Arabidopsis thaliana (Mouse-ear cress)).